A 456-amino-acid polypeptide reads, in one-letter code: tRNA modification GTPase MnmE (456 aa).

(6S)-5-formyl-5,6,7,8-tetrahydrofolate-binding residues include R24, E81, and K120. A TrmE-type G domain is found at 216–379 (GMTVVIAGRP…LREHLKACMG (164 aa)). Residue N226 coordinates K(+). Residues 226–231 (NAGKSS), 245–251 (TEIAGTT), 270–273 (DTAG), 335–338 (NKAD), and 359–361 (SAR) each bind GTP. S230 lines the Mg(2+) pocket. T245, I247, and T250 together coordinate K(+). A Mg(2+)-binding site is contributed by T251. (6S)-5-formyl-5,6,7,8-tetrahydrofolate is bound at residue K456.

This sequence belongs to the TRAFAC class TrmE-Era-EngA-EngB-Septin-like GTPase superfamily. TrmE GTPase family. Homodimer. Heterotetramer of two MnmE and two MnmG subunits. K(+) serves as cofactor.

The protein resides in the cytoplasm. Functionally, exhibits a very high intrinsic GTPase hydrolysis rate. Involved in the addition of a carboxymethylaminomethyl (cmnm) group at the wobble position (U34) of certain tRNAs, forming tRNA-cmnm(5)s(2)U34. In Pseudomonas syringae pv. syringae (strain B728a), this protein is tRNA modification GTPase MnmE.